Here is a 486-residue protein sequence, read N- to C-terminus: MRILEIFAILLILKEVRPQTKRSHKVNMKTPFQKRKNHHLNTDSRATLMSPADLHSVEHSIVQIRDPTLIPHYDQKSQEDMKLHFLKNTLVTCNDGTTAGYYLRETKGSKRWIIFLEGGWCCYSKETCGVRYDNVKRLMSSSNWPQTRKGTGILSPRQDENPYWWNVNAVFVPYCSSDVWSGNVSKTQDGYAFMGSVIIQEVIRDLVPRGMKQAKSVILAGSSAGGTGVLINIDRVAALVEETTSESVQVRGLVDSGWFLDSRHSKQSDCLDISKCALTEAIKKGLKLWNGILPENCKQQFKKGDEWRCFYGPRLFTSMKSPIFVVQWLYDQEQLRIENIQTEFQSMTENQWNSIQNIGREFKKSLREVPAVFAPACLSHTLITKSNWLEFQVKSVTLAKALHCWDRSLQENRAPKGVIRGCPFHLVDNCQWPHCNPTCPAIYDATSGQELSILQMFLKLRLESQRRGQEPKGDLGPLMSMLRNSG.

The N-terminal stretch at 1-18 (MRILEIFAILLILKEVRP) is a signal peptide. N-linked (GlcNAc...) asparagine glycosylation occurs at N183. Catalysis depends on charge relay system residues S223, D331, and H380.

This sequence belongs to the pectinacetylesterase family. Notum subfamily.

The protein resides in the secreted. It catalyses the reaction [Wnt protein]-O-(9Z)-hexadecenoyl-L-serine + H2O = [Wnt protein]-L-serine + (9Z)-hexadecenoate + H(+). Functionally, carboxylesterase that acts as a key negative regulator of the Wnt signaling pathway by specifically mediating depalmitoleoylation of WNT proteins. Serine palmitoleoylation of WNT proteins is required for efficient binding to frizzled receptors. The sequence is that of Palmitoleoyl-protein carboxylesterase notum2 from Xenopus laevis (African clawed frog).